Reading from the N-terminus, the 89-residue chain is Long neurotoxin homolog TA-bm16 (89 aa).

Residues 1-21 (MKTLLLTLVVVTIVCLDLGYT) form the signal peptide. Disulfide bonds link C24/C45, C27/C32, C38/C66, C70/C81, and C82/C87.

This sequence belongs to the three-finger toxin family. Ancestral subfamily. Orphan group V sub-subfamily. In terms of tissue distribution, expressed by the venom gland.

Its subcellular location is the secreted. Exhibits M2 muscarinic acetylcholine receptor (CHRM2)-blocking activity, but has a weak binding activity toward nicotinic AChR. Moreover, it inhibits collagen-induced platelet aggregation. This chain is Long neurotoxin homolog TA-bm16, found in Bungarus multicinctus (Many-banded krait).